The chain runs to 445 residues: MAERKYFGTDGVRGLVGQSPITPEFVMKLGWAAGKVLAKQGTKKVIIGKDTRISGYMLESALEAGLAAAGLKAKFTGPMPTPAVAYLTQTFRAEAGIVISASHNPYYDNGIKFFSSEGTKLPDDVEMAIEAELDKPMTCVESALLGKASRLNDAAGRYIEFCKSTFPKELSLAGVKMVVDCAHGATYHIAPNVFKELGAEIITIGCEPNGTNINHEVGATDVRALQAKVLEEKADFGVAFDGDGDRIIMVDDLGNKVDGDQIAYIIARDALRRGELKGGVVGTLMTNMGMEVALRNLGIPFVRSNVGDRYVMEKLLENNWKIGAENSGHVILLDKVTTGDAIVAALQVIASIVGSKMSLKELCNGMTLFPQVLENIRFVGDNNPLDTELVKAAQADVETKLGDNGRVLLRKSGTEPLIRVMVEGENAELVQQYALQIVDAVKESC.

The active-site Phosphoserine intermediate is the Ser102. Residues Ser102, Asp241, Asp243, and Asp245 each coordinate Mg(2+). At Ser102 the chain carries Phosphoserine.

It belongs to the phosphohexose mutase family. Mg(2+) serves as cofactor. Post-translationally, activated by phosphorylation.

The catalysed reaction is alpha-D-glucosamine 1-phosphate = D-glucosamine 6-phosphate. In terms of biological role, catalyzes the conversion of glucosamine-6-phosphate to glucosamine-1-phosphate. This chain is Phosphoglucosamine mutase, found in Aliivibrio salmonicida (strain LFI1238) (Vibrio salmonicida (strain LFI1238)).